The primary structure comprises 686 residues: Rhophilin-2 (686 aa).

Residues 26 to 100 (NPLAQTGRSK…LEGLNISVGV (75 aa)) enclose the REM-1 domain. Residues 46-66 (QILKAVRMRTGAENLLKVATN) are interaction with Rho. Positions 111–502 (PLIPLGLKET…TDFFQKLGPL (392 aa)) constitute a BRO1 domain. One can recognise a PDZ domain in the interval 515–593 (RGIHFTVEEG…EEVEMKVVSL (79 aa)). A Phosphothreonine modification is found at Thr655.

The protein belongs to the RHPN family. As to quaternary structure, interacts with GTP-bound RhoA and RhoB. Interacts with both GTP- and GDP-bound RhoA. Interacts with KRT18.

It localises to the cytoplasm. It is found in the perinuclear region. In terms of biological role, binds specifically to GTP-Rho. May function in a Rho pathway to limit stress fiber formation and/or increase the turnover of F-actin structures in the absence of high levels of RhoA activity. The chain is Rhophilin-2 (Rhpn2) from Mus musculus (Mouse).